The following is a 256-amino-acid chain: Undecaprenyl-diphosphatase (256 aa).

The next 7 membrane-spanning stretches (helical) occupy residues 1–21 (MDIF…FLPV), 41–61 (FHKT…LALF), 69–89 (VDIW…GFLL), 96–116 (LFAP…FLVL), 172–192 (VAAE…TGYD), 207–227 (ALGV…KGFL), and 233–253 (FNFV…LFYL).

It belongs to the UppP family.

Its subcellular location is the cell inner membrane. It carries out the reaction di-trans,octa-cis-undecaprenyl diphosphate + H2O = di-trans,octa-cis-undecaprenyl phosphate + phosphate + H(+). Its function is as follows. Catalyzes the dephosphorylation of undecaprenyl diphosphate (UPP). Confers resistance to bacitracin. This Wolinella succinogenes (strain ATCC 29543 / DSM 1740 / CCUG 13145 / JCM 31913 / LMG 7466 / NCTC 11488 / FDC 602W) (Vibrio succinogenes) protein is Undecaprenyl-diphosphatase.